We begin with the raw amino-acid sequence, 181 residues long: MQNTNRKILWTSNESSDIAAPAYQTWAQEEGYEIISIGSSQYQSMENDAEFKSYTLNDFGDRFVNEFQTEEVPFHKLTEIEKDNWNWVMAKVKELTRVWSNWKNLYKHYEFSIIKKHPNAEGLHSNGRIQIVRKILNERSHLFNTIMHEICHATSFSPDVSQRFEQGLTSAFYPVMKLKPE.

The protein to M.pneumoniae MPN_635 C-terminal region.

This is an uncharacterized protein from Mycoplasma pneumoniae (strain ATCC 29342 / M129 / Subtype 1) (Mycoplasmoides pneumoniae).